Reading from the N-terminus, the 60-residue chain is Metallothionein A (60 aa).

The tract at residues 1–28 is beta; that stretch reads MDPCECSKTGKCNCGTSCTCTNCSCKCC. Residues Cys4, Cys6, Cys12, Cys14, Cys18, Cys20, Cys23, Cys25, Cys28, Cys32, Cys33, Cys35, Cys36, Cys40, Cys43, Cys47, Cys49, Cys54, Cys58, and Cys59 each contribute to the a divalent metal cation site. The tract at residues 29–60 is alpha; it reads KKSCCSCCPSGCSKCASGCVCKGNSCDKSCCQ.

It belongs to the metallothionein superfamily. Type 1 family.

In terms of biological role, metallothioneins have a high content of cysteine residues that bind various heavy metals. This chain is Metallothionein A (mta), found in Cyprinodon sp. (Pupfish).